A 235-amino-acid polypeptide reads, in one-letter code: Urease accessory protein UreF (235 aa).

This sequence belongs to the UreF family. UreD, UreF and UreG form a complex that acts as a GTP-hydrolysis-dependent molecular chaperone, activating the urease apoprotein by helping to assemble the nickel containing metallocenter of UreC. The UreE protein probably delivers the nickel.

The protein localises to the cytoplasm. Its function is as follows. Required for maturation of urease via the functional incorporation of the urease nickel metallocenter. This Haemophilus influenzae (strain PittEE) protein is Urease accessory protein UreF.